The sequence spans 328 residues: GMP reductase (328 aa).

Catalysis depends on cysteine 176, which acts as the Thioimidate intermediate. 205 to 228 (IIADGGIRTHGDIAKSIRFGASMI) lines the NADP(+) pocket.

It belongs to the IMPDH/GMPR family. GuaC type 2 subfamily.

It catalyses the reaction IMP + NH4(+) + NADP(+) = GMP + NADPH + 2 H(+). In terms of biological role, catalyzes the irreversible NADPH-dependent deamination of GMP to IMP. It functions in the conversion of nucleobase, nucleoside and nucleotide derivatives of G to A nucleotides, and in maintaining the intracellular balance of A and G nucleotides. This chain is GMP reductase, found in Streptococcus pneumoniae (strain ATCC 700669 / Spain 23F-1).